Consider the following 129-residue polypeptide: Lysozyme C (129 aa).

The C-type lysozyme domain maps to 1-129 (KVFSKCELAH…LSEYLASCNL (129 aa)). 4 cysteine pairs are disulfide-bonded: cysteine 6–cysteine 127, cysteine 30–cysteine 115, cysteine 65–cysteine 80, and cysteine 76–cysteine 94. Catalysis depends on residues glutamate 35 and aspartate 53. Ca(2+) contacts are provided by lysine 82, aspartate 85, asparagine 87, aspartate 90, and aspartate 91.

Belongs to the glycosyl hydrolase 22 family. Monomer. Ca(2+) serves as cofactor.

The catalysed reaction is Hydrolysis of (1-&gt;4)-beta-linkages between N-acetylmuramic acid and N-acetyl-D-glucosamine residues in a peptidoglycan and between N-acetyl-D-glucosamine residues in chitodextrins.. Functionally, lysozymes have primarily a bacteriolytic function; those in tissues and body fluids are associated with the monocyte-macrophage system and enhance the activity of immunoagents. The polypeptide is Lysozyme C (LYZ) (Equus asinus (Donkey)).